Here is a 368-residue protein sequence, read N- to C-terminus: Acetyl-coenzyme A carboxylase carboxyl transferase subunit alpha (368 aa).

Positions 44–294 (EIDNKLQEIY…RKSIEKNLNE (251 aa)) constitute a CoA carboxyltransferase C-terminal domain.

It belongs to the AccA family. In terms of assembly, acetyl-CoA carboxylase is a heterohexamer composed of biotin carboxyl carrier protein (AccB), biotin carboxylase (AccC) and two subunits each of ACCase subunit alpha (AccA) and ACCase subunit beta (AccD).

The protein resides in the cytoplasm. The enzyme catalyses N(6)-carboxybiotinyl-L-lysyl-[protein] + acetyl-CoA = N(6)-biotinyl-L-lysyl-[protein] + malonyl-CoA. The protein operates within lipid metabolism; malonyl-CoA biosynthesis; malonyl-CoA from acetyl-CoA: step 1/1. Its function is as follows. Component of the acetyl coenzyme A carboxylase (ACC) complex. First, biotin carboxylase catalyzes the carboxylation of biotin on its carrier protein (BCCP) and then the CO(2) group is transferred by the carboxyltransferase to acetyl-CoA to form malonyl-CoA. The sequence is that of Acetyl-coenzyme A carboxylase carboxyl transferase subunit alpha from Pelagibacter ubique (strain HTCC1062).